Consider the following 209-residue polypeptide: Putative cardiolipin synthase (209 aa).

Helical transmembrane passes span 27–47, 82–102, 126–146, and 157–177; these read AFVYVVLSAHANGWGVAILVF, VTVPIVFGLSGIVPWWFVLTL, VTYVGKAATFGFMVGFPTILL, and LLACGWAFLIWGMYAYLWAFV.

The protein belongs to the CDP-alcohol phosphatidyltransferase class-I family.

Its subcellular location is the cell membrane. The enzyme catalyses a CDP-1,2-diacyl-sn-glycerol + a 1,2-diacyl-sn-glycero-3-phospho-(1'-sn-glycerol) = a cardiolipin + CMP + H(+). It participates in lipid metabolism; phospholipid metabolism. Its function is as follows. May catalyze the biosynthesis of cardiolipin from phosphatidylglycerol (PG) and CDP-diacylglycerol. This is Putative cardiolipin synthase from Mycobacterium bovis (strain ATCC BAA-935 / AF2122/97).